The chain runs to 149 residues: Calmodulin (149 aa).

Alanine 2 carries the N-acetylalanine modification. 4 EF-hand domains span residues 8 to 43 (EQIA…VGQN), 44 to 79 (PTEA…KMKD), 81 to 116 (DSEE…LGEK), and 117 to 149 (LTDE…MMSK). Ca(2+)-binding residues include aspartate 21, aspartate 23, aspartate 25, threonine 27, glutamate 32, aspartate 57, aspartate 59, asparagine 61, threonine 63, glutamate 68, aspartate 94, aspartate 96, asparagine 98, glutamate 105, aspartate 130, aspartate 132, aspartate 134, glutamine 136, and glutamate 141.

The protein belongs to the calmodulin family.

Calmodulin mediates the control of a large number of enzymes, ion channels and other proteins by Ca(2+). Among the enzymes to be stimulated by the calmodulin-Ca(2+) complex are a number of protein kinases and phosphatases. This is Calmodulin (CMD1) from Achlya klebsiana.